The chain runs to 343 residues: Homeobox protein DBX1 (343 aa).

Disordered stretches follow at residues 56–100 and 240–343; these read RSVP…TAFS and KERE…ITVS. A DNA-binding region (homeobox) is located at residues 181-240; sequence GMLRRAVFSDVQRKALEKMFQKQKYISKPDRKKLAAKLGLKDSQVKIWFQNRRMKWRNSK. The segment covering 314–323 has biased composition (low complexity); the sequence is AHSSSPGKPS. Over residues 326-343 the composition is skewed to acidic residues; sequence SDSEEEEEGEEQEEITVS.

Belongs to the H2.0 homeobox family.

The protein resides in the nucleus. Its function is as follows. Could have a role in patterning the central nervous system during embryogenesis. Has a key role in regulating the distinct phenotypic features that distinguish two major classes of ventral interneurons, V0 and V1 neurons. Regulates the transcription factor profile, neurotransmitter phenotype, intraspinal migratory path and axonal trajectory of V0 neurons, features that differentiate them from an adjacent set of V1 neurons. This is Homeobox protein DBX1 (DBX1) from Homo sapiens (Human).